A 600-amino-acid polypeptide reads, in one-letter code: Glutamine--fructose-6-phosphate aminotransferase [isomerizing] (600 aa).

Residue Cys-2 is the Nucleophile; for GATase activity of the active site. The Glutamine amidotransferase type-2 domain maps to 2 to 217 (CGIVGFIGEQ…DKEIVIVMKE (216 aa)). 2 SIS domains span residues 283-422 (IRNA…AKGE) and 452-590 (LAKQ…VDKP). The active-site For Fru-6P isomerization activity is Lys-595.

In terms of assembly, homodimer.

It localises to the cytoplasm. It carries out the reaction D-fructose 6-phosphate + L-glutamine = D-glucosamine 6-phosphate + L-glutamate. Functionally, catalyzes the first step in hexosamine metabolism, converting fructose-6P into glucosamine-6P using glutamine as a nitrogen source. This is Glutamine--fructose-6-phosphate aminotransferase [isomerizing] from Bacillus anthracis.